A 443-amino-acid chain; its full sequence is Proline--tRNA ligase (443 aa).

This sequence belongs to the class-II aminoacyl-tRNA synthetase family. ProS type 2 subfamily. As to quaternary structure, homodimer.

Its subcellular location is the cytoplasm. The enzyme catalyses tRNA(Pro) + L-proline + ATP = L-prolyl-tRNA(Pro) + AMP + diphosphate. Catalyzes the attachment of proline to tRNA(Pro) in a two-step reaction: proline is first activated by ATP to form Pro-AMP and then transferred to the acceptor end of tRNA(Pro). The polypeptide is Proline--tRNA ligase (Zymomonas mobilis subsp. mobilis (strain ATCC 10988 / DSM 424 / LMG 404 / NCIMB 8938 / NRRL B-806 / ZM1)).